A 1054-amino-acid chain; its full sequence is Translation initiation factor IF-2 (1054 aa).

Disordered regions lie at residues 57 to 213 (DKRK…AASC), 225 to 248 (DPLA…NPGD), 287 to 315 (SGRP…HGLQ), and 401 to 436 (DHAG…KQEL). A compositionally biased stretch (polar residues) spans 92 to 104 (QEPSQAASDVSSP). Positions 111 to 213 (EASGAEAAAS…VTSGRRAASC (103 aa)) are enriched in low complexity. Residues 401 to 418 (DHAGRGRELVDVSKNKDK) are compositionally biased toward basic and acidic residues. The 170-residue stretch at 552–721 (TRPPVVTVMG…VLQAEVLELT (170 aa)) folds into the tr-type G domain. Residues 561–568 (GHVDHGKT) form a G1 region. 561–568 (GHVDHGKT) serves as a coordination point for GTP. The interval 586-590 (GITQH) is G2. A G3 region spans residues 607-610 (DTPG). GTP-binding positions include 607 to 611 (DTPGH) and 661 to 664 (NKMD). The interval 661-664 (NKMD) is G4. The segment at 697-699 (SAK) is G5.

This sequence belongs to the TRAFAC class translation factor GTPase superfamily. Classic translation factor GTPase family. IF-2 subfamily.

It is found in the cytoplasm. In terms of biological role, one of the essential components for the initiation of protein synthesis. Protects formylmethionyl-tRNA from spontaneous hydrolysis and promotes its binding to the 30S ribosomal subunits. Also involved in the hydrolysis of GTP during the formation of the 70S ribosomal complex. This Stigmatella aurantiaca protein is Translation initiation factor IF-2 (infB).